We begin with the raw amino-acid sequence, 493 residues long: Putative MgpC-like protein MPN_414 (493 aa).

Positions 1-14 (MKPTSLPKNFTNNP) are enriched in polar residues. Disordered regions lie at residues 1–92 (MKPT…GHNS) and 441–493 (KSAR…SGNH). Basic and acidic residues-rich tracts occupy residues 25 to 34 (DNGRAYRKLN) and 44 to 56 (DSTKDGKGKDKDG). Composition is skewed to polar residues over residues 72–92 (VSSTGSQMSAVTDSQQSGHNS) and 445–472 (ENAQSTSDDNSNTKVKWTKPPRTTSPCR). Basic and acidic residues predominate over residues 482-493 (RVTEEERSSGNH).

The protein belongs to the MgpC family.

The polypeptide is Putative MgpC-like protein MPN_414 (Mycoplasma pneumoniae (strain ATCC 29342 / M129 / Subtype 1) (Mycoplasmoides pneumoniae)).